A 283-amino-acid chain; its full sequence is Beta-glucoside operon antiterminator (283 aa).

2 consecutive PRD domains span residues 65–170 (RIPL…SHMP) and 171–280 (EVMR…LQEQ).

This sequence belongs to the transcriptional antiterminator BglG family. Phosphorylated and inactivated by ArbF (EII-Bgl). The degree of phosphorylation is dependent on the presence or absence of beta-glucosides which act as inducers of the operon expression. Addition of inducer result in the rapid dephosphorylation of ArbG.

Its function is as follows. Mediates the positive regulation of the beta-glucoside (arb) operon by functioning as a transcriptional antiterminator. This is an RNA-binding protein that recognizes a specific sequence located just upstream of two termination sites within the operon. The chain is Beta-glucoside operon antiterminator (arbG) from Dickeya chrysanthemi (Pectobacterium chrysanthemi).